A 172-amino-acid chain; its full sequence is Water stress-inducible protein Rab21 (172 aa).

Residues 1–172 (MEHQGQHGHV…KIKEKLPGQH (172 aa)) are disordered. A Type A repeat occupies 3–28 (HQGQHGHVTSRVDEYGNPVGTGAGHG). Positions 21 to 65 (VGTGAGHGQMGTAGMGTHGTTGGMGTHGTTGGMGTHGTTGTGGGQ) are enriched in gly residues. One copy of the Type B repeat lies at 98–115 (RRKKGIKEKIKEKLPGGN). Residues 124-139 (GGTGGAYGQQGHGTGM) are compositionally biased toward gly residues. One copy of the Type A repeat lies at 125–149 (GTGGAYGQQGHGTGMTTGTTGAHGT). Residues 140-153 (TTGTTGAHGTTTTD) show a composition bias toward low complexity. Residues 154–172 (TGEKKGIMDKIKEKLPGQH) are compositionally biased toward basic and acidic residues. The Type B repeat unit spans residues 156–172 (EKKGIMDKIKEKLPGQH).

The protein belongs to the plant dehydrin family.

It is found in the cytoplasm. In Oryza sativa subsp. indica (Rice), this protein is Water stress-inducible protein Rab21 (RAB21).